The primary structure comprises 95 residues: UPF0132 membrane protein AF_0736 (95 aa).

The next 3 membrane-spanning stretches (helical) occupy residues 2–22, 32–52, and 55–75; these read CYTL…SPFV, TFST…GALL, and VVMA…SRGE.

Belongs to the UPF0132 family.

The protein resides in the cell membrane. The sequence is that of UPF0132 membrane protein AF_0736 from Archaeoglobus fulgidus (strain ATCC 49558 / DSM 4304 / JCM 9628 / NBRC 100126 / VC-16).